The sequence spans 138 residues: Acidic phospholipase A2 Cvv-E6a (138 aa).

The signal sequence occupies residues 1–16; that stretch reads MRTLWIVAVLLLGVEG. 7 cysteine pairs are disulfide-bonded: Cys-42–Cys-131, Cys-44–Cys-60, Cys-59–Cys-111, Cys-65–Cys-138, Cys-66–Cys-104, Cys-73–Cys-97, and Cys-91–Cys-102. Tyr-43, Gly-45, and Gly-47 together coordinate Ca(2+). His-63 is an active-site residue. Asp-64 lines the Ca(2+) pocket. Asp-105 is an active-site residue.

This sequence belongs to the phospholipase A2 family. Group II subfamily. D49 sub-subfamily. The cofactor is Ca(2+). In terms of tissue distribution, expressed by the venom gland.

The protein localises to the secreted. It carries out the reaction a 1,2-diacyl-sn-glycero-3-phosphocholine + H2O = a 1-acyl-sn-glycero-3-phosphocholine + a fatty acid + H(+). Snake venom phospholipase A2 (PLA2) that significantly inhibits ADP-induced platelet aggregation in platelet-rich plasma of human, rabbit and guinea pig. PLA2 catalyzes the calcium-dependent hydrolysis of the 2-acyl groups in 3-sn-phosphoglycerides. The protein is Acidic phospholipase A2 Cvv-E6a of Crotalus viridis viridis (Prairie rattlesnake).